The following is a 205-amino-acid chain: Recombination protein RecR (205 aa).

The segment at 64 to 79 adopts a C4-type zinc-finger fold; it reads CSRCYFITQNDLCAIC. Residues 87–182 enclose the Toprim domain; the sequence is RIVCVVEEPL…RVTRLARGLP (96 aa).

The protein belongs to the RecR family.

May play a role in DNA repair. It seems to be involved in an RecBC-independent recombinational process of DNA repair. It may act with RecF and RecO. The chain is Recombination protein RecR from Roseiflexus castenholzii (strain DSM 13941 / HLO8).